Consider the following 79-residue polypeptide: Large ribosomal subunit protein uL22 (79 aa).

Belongs to the universal ribosomal protein uL22 family. In terms of assembly, part of the 50S ribosomal subunit.

Functionally, this protein binds specifically to 23S rRNA; its binding is stimulated by other ribosomal proteins, e.g. L4, L17, and L20. It is important during the early stages of 50S assembly. It makes multiple contacts with different domains of the 23S rRNA in the assembled 50S subunit and ribosome. Its function is as follows. The globular domain of the protein is located near the polypeptide exit tunnel on the outside of the subunit, while an extended beta-hairpin is found that lines the wall of the exit tunnel in the center of the 70S ribosome. The chain is Large ribosomal subunit protein uL22 (rplV) from Clover proliferation phytoplasma.